The primary structure comprises 432 residues: MTFSEPQKRISSAADVDSFKRSQPYATIISLLDKYSSTVQEHLLPPNEDELAASSKALVTLCRKLSALIDETPPLEGPRRFGNVAVRDWHDKMEAQTTALLTEAFPSINKDSIIELQYYLHGGMGSKQRLDFGTGHELSFMAFVGGLQKLGLLETDLPAPDVLFIFETYFVLVRKLIMTYSLEPAGSHGVWGLDDHSHLPYILGSAQKVSRSVTASTLLVPTKYDKECPPSSVMNPRIVQQQKTTNLYFAAIAFIYDIKSGPFYEHSPILYDISGIATWAKIHSGMIKMYIAEVLGKFPVVQHFYFGSELYPWKDTEGNDLPYSKVEDEEPVKPKLPLGFKSKKEPQTTPHARLPLMGPRGMPMETVERLARRDGQRAAREKEEREDRASGGASGTTGAPGATALPPTRAPGSSVPGGDAPGMAPTKAPWAK.

Residues 322–432 (PYSKVEDEEP…MAPTKAPWAK (111 aa)) form a disordered region. A compositionally biased stretch (basic and acidic residues) spans 366–389 (TVERLARRDGQRAAREKEEREDRA). Over residues 396 to 412 (TTGAPGATALPPTRAPG) the composition is skewed to low complexity.

This sequence belongs to the PTPA-type PPIase family.

It is found in the cytoplasm. The protein localises to the nucleus. It catalyses the reaction [protein]-peptidylproline (omega=180) = [protein]-peptidylproline (omega=0). PPIases accelerate the folding of proteins. It catalyzes the cis-trans isomerization of proline imidic peptide bonds in oligopeptides. Acts as a regulatory subunit for PP2A-like phosphatases modulating their activity or substrate specificity, probably by inducing a conformational change in the catalytic subunit, a direct target of the PPIase. Can reactivate inactive phosphatase PP2A-phosphatase methylesterase complexes (PP2Ai) in presence of ATP and Mg(2+) by dissociating the inactive form from the complex. This chain is Serine/threonine-protein phosphatase 2A activator 1 (RRD1), found in Yarrowia lipolytica (strain CLIB 122 / E 150) (Yeast).